The following is a 205-amino-acid chain: Anaerobic dimethyl sulfoxide reductase chain B (205 aa).

3 consecutive 4Fe-4S ferredoxin-type domains span residues 4-32 (YGFY…LGTE), 57-89 (NIFA…KNAD), and 90-119 (GFVI…YDAQ). Residues Cys-13, Cys-16, Cys-19, Cys-23, Cys-67, Cys-70, Cys-75, Cys-79, Cys-99, Cys-102, Cys-105, Cys-109, Cys-126, Cys-129, Cys-141, and Cys-145 each contribute to the [4Fe-4S] cluster site.

In terms of assembly, heterotrimeric enzyme composed of a catalytic heterodimer (DmsAB) and a membrane anchor protein (DmsC). Requires [4Fe-4S] cluster as cofactor.

In terms of biological role, electron transfer subunit of the terminal reductase during anaerobic growth on various sulfoxide and N-oxide compounds. The sequence is that of Anaerobic dimethyl sulfoxide reductase chain B (dmsB) from Haemophilus influenzae (strain ATCC 51907 / DSM 11121 / KW20 / Rd).